A 115-amino-acid chain; its full sequence is Large ribosomal subunit protein uL22 (115 aa).

The protein belongs to the universal ribosomal protein uL22 family. In terms of assembly, part of the 50S ribosomal subunit.

Its function is as follows. This protein binds specifically to 23S rRNA; its binding is stimulated by other ribosomal proteins, e.g. L4, L17, and L20. It is important during the early stages of 50S assembly. It makes multiple contacts with different domains of the 23S rRNA in the assembled 50S subunit and ribosome. The globular domain of the protein is located near the polypeptide exit tunnel on the outside of the subunit, while an extended beta-hairpin is found that lines the wall of the exit tunnel in the center of the 70S ribosome. This Thioalkalivibrio sulfidiphilus (strain HL-EbGR7) protein is Large ribosomal subunit protein uL22.